A 301-amino-acid polypeptide reads, in one-letter code: Ubiquitin thioesterase OTU1 (301 aa).

The tract at residues 4–80 is UBX-like; the sequence is KVTGAGINQV…TIESSDSNES (77 aa). Residues 109–229 enclose the OTU domain; the sequence is LSVHPVLDDN…GIHYDSLTMN (121 aa). The interval 114–120 is cys-loop; sequence VLDDNSC. D117 is an active-site residue. The Nucleophile role is filled by C120. Residue K160 forms a Glycyl lysine isopeptide (Lys-Gly) (interchain with G-Cter in ubiquitin) linkage. The tract at residues 169 to 179 is variable-loop; the sequence is ILKMESWGGAI. The segment at 218–222 is his-loop; that stretch reads FNGIH. I221 contacts substrate. H222 is an active-site residue. The tract at residues 243–248 is S2 site; the sequence is DDVLTA. The segment at 270-294 adopts a C2H2-type zinc-finger fold; that stretch reads IKCNTCQMTFVGEREVARHAESTGH. H294 is a catalytic residue.

In terms of assembly, forms a complex composed of CDC48, NPL4, UFD1, DOA1, SHP1 and deubiquitinase OTU1; within the complex interacts with CDC48 and DOA1/UFD3.

The protein localises to the cytoplasm. The protein resides in the nucleus. The catalysed reaction is Thiol-dependent hydrolysis of ester, thioester, amide, peptide and isopeptide bonds formed by the C-terminal Gly of ubiquitin (a 76-residue protein attached to proteins as an intracellular targeting signal).. Its function is as follows. Hydrolase that can remove conjugated ubiquitin from proteins and may therefore play an important regulatory role at the level of protein turnover by preventing degradation. Participates in the regulation of the ubiquitin conjugation pathway involving CDC48 by hindering multiubiquitination of substrates at the CDC48 chaperone. May be indirectly involved in PIS1 gene expression. This chain is Ubiquitin thioesterase OTU1 (OTU1), found in Saccharomyces cerevisiae (strain ATCC 204508 / S288c) (Baker's yeast).